Consider the following 121-residue polypeptide: MITKPNRNELRKRRHLRVRKKVFGTPERPRLNVFRSLKHIYAQIIDDTKGHTLVHASTLDPELRGIAKGANKQSAKLVGELIAKRALEKGIKDVVFDRGGYIYHGVVKELADAARQAGLNF.

It belongs to the universal ribosomal protein uL18 family. As to quaternary structure, part of the 50S ribosomal subunit; part of the 5S rRNA/L5/L18/L25 subcomplex. Contacts the 5S and 23S rRNAs.

Its function is as follows. This is one of the proteins that bind and probably mediate the attachment of the 5S RNA into the large ribosomal subunit, where it forms part of the central protuberance. The protein is Large ribosomal subunit protein uL18 of Thermoanaerobacter pseudethanolicus (strain ATCC 33223 / 39E) (Clostridium thermohydrosulfuricum).